A 555-amino-acid chain; its full sequence is MGEDVIDSLQLNELLNAGEYKIGELTFQSIRSSQELQKKNTIVNLFGIVKDFTPSRQSLHGTKDWVTTVYLWDPTCDTSSIGLQIHLFSKQGNDLPVIKQVGQPLLLHQITLRSYRDRTQGLSKDQFRYALWPDFSSNSKDTLCPQPMPRLMKTGDKEEQFALLLNKIWDEQTNKHKNGELLSTSSARQNQTGLSYPSVSFSLLSQITPHQRCSFYAQVIKTWYSDKNFTLYVTDYTENELFFPMSPYTSSSRWRGPFGRFSIRCILWDEHDFYCRNYIKEGDYVVMKNVRTKIDHLGYLECILHGDSAKRYNMSIEKVDSEEPELNEIKSRKRLYVQNCQNGIEAVIEKLSQSQQSENPFIAHELKQTSVNEITAHVINEPASLKLTTISTILHAPLQNLLKPRKHRLRVQVVDFWPKSLTQFAVLSQPPSSYVWMFALLVRDVSNVTLPVIFFDSDAAELINSSKIQPCNLADHPQMTLQLKERLFLIWGNLEERIQHHISKGESPTLAAEDVETPWFDIYVKEYIPVIGNTKDHQSLTFLQKRWRGFGTKIV.

This sequence belongs to the telombin family. As to quaternary structure, self-associates. Interacts with ccq1, poz1 and tpz1.

The protein localises to the nucleus. Its subcellular location is the chromosome. The protein resides in the telomere. Functionally, single-stranded telomeric DNA-binding protein that is required to protect the 3'-end telomeric overhang. It binds the consensus sequence 5'-GGTTAC-3'. Regulates telomerase and telomere length. This is Protection of telomeres protein 1 (pot1) from Schizosaccharomyces pombe (strain 972 / ATCC 24843) (Fission yeast).